The following is a 159-amino-acid chain: Large ribosomal subunit protein uL11 (159 aa).

The protein belongs to the universal ribosomal protein uL11 family. Part of the ribosomal stalk of the 50S ribosomal subunit. Interacts with L10 and the large rRNA to form the base of the stalk. L10 forms an elongated spine to which L12 dimers bind in a sequential fashion forming a multimeric L10(L12)X complex.

In terms of biological role, forms part of the ribosomal stalk which helps the ribosome interact with GTP-bound translation factors. In Methanococcus maripaludis (strain C5 / ATCC BAA-1333), this protein is Large ribosomal subunit protein uL11.